Consider the following 72-residue polypeptide: Probable movement protein p8 (72 aa).

A disordered region spans residues 16-58 (GRARSVEGKKHNGSGLTGVKRHAVSETSQKSQQGTGNGTMTNI). The segment covering 40–58 (SETSQKSQQGTGNGTMTNI) has biased composition (polar residues).

The protein belongs to the carmovirus/necrovirus/panicovirus movement protein p8 family.

Functionally, cell-to-cell movement. This chain is Probable movement protein p8, found in Tobacco necrosis virus (strain A) (TNV-A).